Reading from the N-terminus, the 344-residue chain is Probable dual-specificity RNA methyltransferase RlmN (344 aa).

The active-site Proton acceptor is glutamate 89. A Radical SAM core domain is found at 95 to 329 (TDQRLTVCVS…VSLRASRGLD (235 aa)). A disulfide bond links cysteine 102 and cysteine 334. [4Fe-4S] cluster contacts are provided by cysteine 109, cysteine 113, and cysteine 116. Residues 156–157 (GE), serine 186, 215–217 (SLH), and asparagine 291 contribute to the S-adenosyl-L-methionine site. Cysteine 334 (S-methylcysteine intermediate) is an active-site residue.

The protein belongs to the radical SAM superfamily. RlmN family. [4Fe-4S] cluster is required as a cofactor.

It is found in the cytoplasm. It carries out the reaction adenosine(2503) in 23S rRNA + 2 reduced [2Fe-2S]-[ferredoxin] + 2 S-adenosyl-L-methionine = 2-methyladenosine(2503) in 23S rRNA + 5'-deoxyadenosine + L-methionine + 2 oxidized [2Fe-2S]-[ferredoxin] + S-adenosyl-L-homocysteine. The catalysed reaction is adenosine(37) in tRNA + 2 reduced [2Fe-2S]-[ferredoxin] + 2 S-adenosyl-L-methionine = 2-methyladenosine(37) in tRNA + 5'-deoxyadenosine + L-methionine + 2 oxidized [2Fe-2S]-[ferredoxin] + S-adenosyl-L-homocysteine. Specifically methylates position 2 of adenine 2503 in 23S rRNA and position 2 of adenine 37 in tRNAs. The polypeptide is Probable dual-specificity RNA methyltransferase RlmN (Parasynechococcus marenigrum (strain WH8102)).